Reading from the N-terminus, the 743-residue chain is Probable TonB-dependent receptor BfrD (743 aa).

A signal peptide spans 1-30 (MKFYSSHPMPESLAAAIAVPLLGLLPAAQA). Residues 62–168 (PLADTPRTVQ…AGGSINLVTK (107 aa)) enclose the TBDR plug domain. In terms of domain architecture, TBDR beta-barrel spans 173 to 743 (QDFTEVQAGI…SAMLTFKLSY (571 aa)). A TonB C-terminal box motif is present at residues 726–743 (YAALGPGRSAMLTFKLSY).

It belongs to the TonB-dependent receptor family.

It is found in the cell outer membrane. Probably involved in iron transport. This Bordetella pertussis (strain Tohama I / ATCC BAA-589 / NCTC 13251) protein is Probable TonB-dependent receptor BfrD (bfrD).